A 543-amino-acid polypeptide reads, in one-letter code: Thiamine transport system permease protein ThiP (543 aa).

12 helical membrane-spanning segments follow: residues 19–39, 64–84, 102–122, 142–162, 205–225, 250–270, 300–320, 343–363, 379–399, 406–426, 468–488, and 510–530; these read VAGGLALAFLATLAGGALLAL, FTIWQAVASSLLSVLFAIPIA, LFALPLALPALVAVLGVTSIY, DIYGIAGILIAHIFFNMPLAV, GMIGLVFMLCVTSFTTVLTLG, AVALTFTQLALTLLILLILRL, IIVIALGFLYVALPIAGVVVS, LALGFSAALLAVFLSLALVAA, GASLILVMPPIVIGAGWFILL, FVMAPLMVVTVNAAMAMPFAV, GMAFAFAMALSLGDLGTIALF, and FDAAGLALILGVLCLALMMIA. The ABC transmembrane type-1 1 domain maps to 62 to 266; the sequence is ARFTIWQAVA…QLALTLLILL (205 aa). In terms of domain architecture, ABC transmembrane type-1 2 spans 339–530; sequence IATSLALGFS…VLCLALMMIA (192 aa).

It belongs to the binding-protein-dependent transport system permease family. CysTW subfamily. In terms of assembly, the complex is composed of two ATP-binding proteins (ThiQ), two transmembrane proteins (ThiP) and a solute-binding protein (ThiB).

The protein resides in the cell inner membrane. Part of the ABC transporter complex ThiBPQ involved in thiamine import. Probably responsible for the translocation of the substrate across the membrane. This is Thiamine transport system permease protein ThiP (thiP) from Brucella abortus (strain 2308).